Reading from the N-terminus, the 521-residue chain is Spermidine transporter DUR31 (521 aa).

The chain crosses the membrane as a helical span at residues 11 to 31 (AIIYLSYAFMLATGLFLAWKF). The N-linked (GlcNAc...) asparagine glycan is linked to asparagine 41. 12 helical membrane passes run 47–67 (IPLA…TTYA), 79–99 (LVYT…GPVI), 117–137 (FGMV…FLFM), 156–176 (ALGA…FGGF), 187–207 (GVCV…YIEI), 227–247 (LVYI…GFWL), 264–284 (IAAF…FLAV), 310–330 (WLVA…FDSL), 354–374 (IMLI…ADNI), 377–397 (IYLI…LGLA), 406–426 (GFDV…FGTV), and 453–473 (FGAF…SAAL).

It belongs to the sodium:solute symporter (SSF) (TC 2.A.21) family.

It localises to the membrane. It catalyses the reaction spermidine(in) = spermidine(out). In terms of biological role, spermidine transporter that is also used by salivary gland-secreted histatin 5 (Hst 5) to enter into candidal cells. A major component of host nonimmune defense systems is salivary histatins, a family of small (3-4 kDa), histidine-rich, cationic proteins secreted by major salivary glands in humans and higher primates. Hst 5 is the most potent of the 12 histatin family members and has fungicidal activity against blastoconidial and filamentous forms of Candida albicans. DUR31 only functions under high concentrations of Hst 5. Hst 5 cojugates to spermidine to be uptaken by DUR31. The sequence is that of Spermidine transporter DUR31 from Candida albicans (strain SC5314 / ATCC MYA-2876) (Yeast).